The sequence spans 370 residues: Anhydro-N-acetylmuramic acid kinase (370 aa).

Position 12–19 (12–19 (GTSLDGVD)) interacts with ATP.

This sequence belongs to the anhydro-N-acetylmuramic acid kinase family.

It carries out the reaction 1,6-anhydro-N-acetyl-beta-muramate + ATP + H2O = N-acetyl-D-muramate 6-phosphate + ADP + H(+). It functions in the pathway amino-sugar metabolism; 1,6-anhydro-N-acetylmuramate degradation. It participates in cell wall biogenesis; peptidoglycan recycling. Catalyzes the specific phosphorylation of 1,6-anhydro-N-acetylmuramic acid (anhMurNAc) with the simultaneous cleavage of the 1,6-anhydro ring, generating MurNAc-6-P. Is required for the utilization of anhMurNAc either imported from the medium or derived from its own cell wall murein, and thus plays a role in cell wall recycling. The chain is Anhydro-N-acetylmuramic acid kinase from Yersinia pseudotuberculosis serotype O:1b (strain IP 31758).